The sequence spans 308 residues: Porphobilinogen deaminase (308 aa).

At C241 the chain carries S-(dipyrrolylmethanemethyl)cysteine.

Belongs to the HMBS family. Monomer. The cofactor is dipyrromethane.

It catalyses the reaction 4 porphobilinogen + H2O = hydroxymethylbilane + 4 NH4(+). It participates in porphyrin-containing compound metabolism; protoporphyrin-IX biosynthesis; coproporphyrinogen-III from 5-aminolevulinate: step 2/4. Its function is as follows. Tetrapolymerization of the monopyrrole PBG into the hydroxymethylbilane pre-uroporphyrinogen in several discrete steps. This is Porphobilinogen deaminase from Staphylococcus saprophyticus subsp. saprophyticus (strain ATCC 15305 / DSM 20229 / NCIMB 8711 / NCTC 7292 / S-41).